We begin with the raw amino-acid sequence, 110 residues long: Ribonuclease P protein component 1 (110 aa).

Belongs to the eukaryotic/archaeal RNase P protein component 1 family. As to quaternary structure, consists of a catalytic RNA component and at least 4-5 protein subunits.

It localises to the cytoplasm. It carries out the reaction Endonucleolytic cleavage of RNA, removing 5'-extranucleotides from tRNA precursor.. Part of ribonuclease P, a protein complex that generates mature tRNA molecules by cleaving their 5'-ends. The chain is Ribonuclease P protein component 1 from Aeropyrum pernix (strain ATCC 700893 / DSM 11879 / JCM 9820 / NBRC 100138 / K1).